Reading from the N-terminus, the 536-residue chain is Membrane protein insertase YidC (536 aa).

The chain crosses the membrane as a helical span at residues 7 to 27 (IIAVVLSLFVLIGWSYLSEFM). Positions 43 to 70 (VQQKASEPVAQPVQTASAPAASSFAPTE) are disordered. The segment covering 58 to 68 (ASAPAASSFAP) has biased composition (low complexity). The next 3 membrane-spanning stretches (helical) occupy residues 346–366 (GNYGVAIIILTILVKLLFWPL), 415–435 (GGCLPMLLQIPVFLGLYQGLL), and 495–515 (IMMFMPVVFTFMFLNFPAGLV).

The protein belongs to the OXA1/ALB3/YidC family. Type 1 subfamily. Interacts with the Sec translocase complex via SecD. Specifically interacts with transmembrane segments of nascent integral membrane proteins during membrane integration.

The protein resides in the cell inner membrane. Required for the insertion and/or proper folding and/or complex formation of integral membrane proteins into the membrane. Involved in integration of membrane proteins that insert both dependently and independently of the Sec translocase complex, as well as at least some lipoproteins. Aids folding of multispanning membrane proteins. This is Membrane protein insertase YidC from Oleidesulfovibrio alaskensis (strain ATCC BAA-1058 / DSM 17464 / G20) (Desulfovibrio alaskensis).